A 460-amino-acid chain; its full sequence is Proton extrusion protein PxcA (460 aa).

2 disordered regions span residues 82–128 (FSRL…QRRD) and 143–190 (SRYK…GSGN). A compositionally biased stretch (polar residues) spans 90–102 (QNGSGPTSAQDKA). Residues 107 to 120 (AAEANVSESSSENS) show a composition bias toward low complexity. A compositionally biased stretch (polar residues) spans 151 to 163 (KSQPISASISTSP). The segment covering 171 to 184 (QPTSTQPSSSNVSV) has biased composition (low complexity). Transmembrane regions (helical) follow at residues 242–262 (FLLL…NFLF), 337–357 (GLKN…LIFV), 373–393 (IYGL…DVFV), and 420–440 (FIYG…KYWI).

The protein belongs to the CemA family.

The protein resides in the cell inner membrane. Its function is as follows. Required for H(+) efflux immediately after light irradiation to form a rapid H(+) concentration gradient across the thylakoid membranes. Together with PxcL, contributes to transient H(+) uptake following dark to light transition. This Synechococcus sp. (strain JA-2-3B'a(2-13)) (Cyanobacteria bacterium Yellowstone B-Prime) protein is Proton extrusion protein PxcA.